Here is a 339-residue protein sequence, read N- to C-terminus: Heat-inducible transcription repressor HrcA (339 aa).

This sequence belongs to the HrcA family.

Negative regulator of class I heat shock genes (grpE-dnaK-dnaJ and groELS operons). Prevents heat-shock induction of these operons. This chain is Heat-inducible transcription repressor HrcA, found in Methylobacillus flagellatus (strain ATCC 51484 / DSM 6875 / VKM B-1610 / KT).